We begin with the raw amino-acid sequence, 217 residues long: Small ribosomal subunit protein uS3 (217 aa).

A KH type-2 domain is found at Ala-29–Gln-97.

This sequence belongs to the universal ribosomal protein uS3 family. Part of the 30S ribosomal subunit. Forms a tight complex with proteins S10 and S14.

In terms of biological role, binds the lower part of the 30S subunit head. Binds mRNA in the 70S ribosome, positioning it for translation. The polypeptide is Small ribosomal subunit protein uS3 (Streptococcus mutans serotype c (strain ATCC 700610 / UA159)).